Consider the following 192-residue polypeptide: Erythropoietin (192 aa).

An N-terminal signal peptide occupies residues 1 to 26 (MGVPDCLALPLLVTFLLLSLGLPVLG). An intrachain disulfide couples Cys33 to Cys187. Asn50, Asn64, and Asn109 each carry an N-linked (GlcNAc...) asparagine glycan.

Belongs to the EPO/TPO family.

The protein resides in the secreted. Its function is as follows. Hormone involved in the regulation of erythrocyte proliferation and differentiation and the maintenance of a physiological level of circulating erythrocyte mass. Binds to EPOR leading to EPOR dimerization and JAK2 activation thereby activating specific downstream effectors, including STAT1 and STAT3. The chain is Erythropoietin (EPO) from Spalax golani (Golan Heights blind mole rat).